We begin with the raw amino-acid sequence, 1707 residues long: MTGGPPYNSQSPTQQPRYPVYSPPSKTRPYYPNNDQYQQHPPQTPPAFPPQPPLARSPHYSHAPSPLPATLPPLNGGAPPSHHQESSSQYQAHQSSGTPQFPLPRPYSASVLSSNGASPYNHPTPSHAHPSSGRLDSLSQSPPKKDQESLYPIGGNVASGFSSSIMLSPPCILSDSIQKPARAADPMSFASILSGPTEERPLPRKQSPLPEPAPVQTPAPAPPVLAPVPAARKATPPPPTAPVPVPAPLPEIKEPEPLPTPLPRLEKKPSAEKRRRNVDQESRASESLPVPPTNGVSEPAKVSRASNVRKTMSERDTEAINKIIAEIDNAEKSDVESPGFEAEYERYIAKGKKRALDAEKAESIRRKRRRHDFLVKLGKTFEKQANAGMDRFRVANEASVIAEVQAKEIQDEKERKKDMQRKRRRENTVRLEMQKKIEAERKANKANDAAEKAKFLREAERAQRKIKSTKRALEGVTSPEEIGEVTPLAPNLEGGTTSSFHIGRSSPSRRKSGRSGGSSRPKKSKEQKQAEKDAAEAAYAAMENDEPLPLAPKEDPRKESLKKEAKGARSKEPTPQPLSAFESKGYNQIYEQIWRDIARKDIPKVYRIKALSLSTRQENLRKTAQLASKQSRKWQERTNKSMKDTQARAKRTMREMMSFWKRNEREERDLRRLAEKQEIESAKKAEAEREANRQRRKLNFLISQTELYSHFIGRKIKGAEADASGDAAVDGSDETVRPGKAGDHTIDLPSSVADLSTKVTNFEDLDFDAEDETALRQAAMANAQNAVKEAQDRARAFNAEENPMAALDEGELNFQNPTSLGDIEISQPNMLTAKLKEYQLKGLNWLVNLYEQGINGILADEMGLGKTIQSISVMAYLAEVHNIWGPFLVIAPASTLHNWQQEITKFVPDIKVLPYWGSAKDRKVLRKFWDRKHITYTKESEFHVLVTSYQLVVLDSQYFQKVKWQYMILDEAQAIKSSQSSRWKNLLGFSCRNRLLLTGTPIQNNMQELWALLHFIMPTLFDSHDEFSEWFSKDIESHAQSNTKLNEDQLRRLHMILKPFMLRRVKKHVQQELGDKVEKDVFCDLTYRQRAYYTNLRNRVSIMDLIEKAAVGDEADSTTLMNLVMQFRKVCNHPDLFERAETKSPFSLAHFAETASFVREGQNVDVRYSTRNLIEYDLPRLLFSSSGRLDVAGPDNEKVGFQNKYLQHLMNIFTPENIKRSVEDDGAFSFLRFADTSINEAYEQSHLGVFERAVRRRGQSDRLSQLGVIYDNEGDQTANSVLPHSLFNIVERNDRQAVYDVAPEGYMRDLMTVSESSFERQGLNVIEPCASPAASAPPIFISCSGQTALRETNDTFFSVPVRHALYSTPSRQLEEQILEKKLDPAPFSLPPMLPKPLSAKGRYTHIEVPSMRRFVTDSGKLAKLDELLRELKAGGHRVLLYFQMTRMIDLMEEYLTYRNYKYCRLDGSTKLEDRRDTVADFQQRPDIFVFLLSTRAGGLGINLTAADTVIFYDSDWNPTIDSQAMDRAHRLGQTRQVTVYRLITRGTIEERIRKRALQKEEVQRVVISGGAAGGVDFNTRNRESRTKDIAMWLADDEQAELIEQKEKEALDRGEVFGAGKGGKKAALKRKKDLTLDDMYHEGEGNFDDISAKPSGAATPVSTADNIATPSSTPVPKRGRGRGTVKGSSKRAKTTTERLRLIDGDGGL.

Disordered stretches follow at residues 1-156 (MTGG…IGGN), 178-314 (QKPA…TMSE), 410-580 (QDEK…PLSA), 627-649 (ASKQSRKWQERTNKSMKDTQARA), and 722-748 (DASGDAAVDGSDETVRPGKAGDHTIDL). Residues 7–16 (YNSQSPTQQP) show a composition bias toward polar residues. Positions 42 to 55 (PQTPPAFPPQPPLA) are enriched in pro residues. Composition is skewed to polar residues over residues 86–99 (SSSQYQAHQSSGTP) and 110–124 (SVLSSNGASPYNHPT). Pro residues-rich tracts occupy residues 209-226 (LPEPAPVQTPAPAPPVLA) and 235-249 (TPPPPTAPVPVPAPL). 6 stretches are compositionally biased toward basic and acidic residues: residues 264–284 (RLEKKPSAEKRRRNVDQESRA), 426–463 (ENTVRLEMQKKIEAERKANKANDAAEKAKFLREAERAQ), 524–535 (SKEQKQAEKDAA), 552–572 (PKEDPRKESLKKEAKGARSKE), 633–647 (KWQERTNKSMKDTQA), and 734–746 (ETVRPGKAGDHTI). A coiled-coil region spans residues 395 to 478 (ANEASVIAEV…TKRALEGVTS (84 aa)). The region spanning 593 to 718 (IWRDIARKDI…SHFIGRKIKG (126 aa)) is the DBINO domain. Positions 635 to 706 (QERTNKSMKD…KLNFLISQTE (72 aa)) form a coiled coil. The Helicase ATP-binding domain occupies 847-1019 (VNLYEQGING…WALLHFIMPT (173 aa)). 860 to 867 (DEMGLGKT) provides a ligand contact to ATP. Positions 970 to 973 (DEAQ) match the DEAQ box motif. A Helicase C-terminal domain is found at 1423–1583 (KLDELLRELK…GVDFNTRNRE (161 aa)). Residues 1643–1707 (EGNFDDISAK…LRLIDGDGGL (65 aa)) are disordered. Positions 1659-1673 (PVSTADNIATPSSTP) are enriched in polar residues. Residues 1676–1692 (KRGRGRGTVKGSSKRAK) are compositionally biased toward basic residues. The segment covering 1693-1707 (TTTERLRLIDGDGGL) has biased composition (basic and acidic residues).

It belongs to the SNF2/RAD54 helicase family. In terms of assembly, component of the INO80 chromatin-remodeling complex.

The protein resides in the nucleus. The enzyme catalyses ATP + H2O = ADP + phosphate + H(+). In terms of biological role, ATPase component of the INO80 complex which remodels chromatin by shifting nucleosomes and is involved in DNA repair. The polypeptide is Chromatin-remodeling ATPase INO80 (ino80) (Aspergillus clavatus (strain ATCC 1007 / CBS 513.65 / DSM 816 / NCTC 3887 / NRRL 1 / QM 1276 / 107)).